The following is a 746-amino-acid chain: UvrABC system protein C (746 aa).

The 80-residue stretch at 18 to 97 (AKPGVYKWRD…IKEFDPRFNV (80 aa)) folds into the GIY-YIG domain. The UVR domain occupies 211–246 (RPYIAQLTRDMKEASAELEFEKAARLRDQIQMLETV). The segment at 557–577 (ANGNDNGEGGSDISGKGHAVP) is disordered.

Belongs to the UvrC family. In terms of assembly, interacts with UvrB in an incision complex.

It localises to the cytoplasm. In terms of biological role, the UvrABC repair system catalyzes the recognition and processing of DNA lesions. UvrC both incises the 5' and 3' sides of the lesion. The N-terminal half is responsible for the 3' incision and the C-terminal half is responsible for the 5' incision. This Bifidobacterium longum (strain DJO10A) protein is UvrABC system protein C.